An 85-amino-acid chain; its full sequence is Small ribosomal subunit protein bS16c (85 aa).

The protein belongs to the bacterial ribosomal protein bS16 family.

The protein localises to the plastid. Its subcellular location is the chloroplast. In Saccharum hybrid (Sugarcane), this protein is Small ribosomal subunit protein bS16c.